Consider the following 188-residue polypeptide: Insulin-like peptide INSL6 (188 aa).

The N-terminal stretch at 1–22 (MKQLCCSCLLWLGLLLAPFSQE) is a signal peptide. Disulfide bonds link cysteine 33/cysteine 169, cysteine 45/cysteine 182, and cysteine 168/cysteine 173. The propeptide at 53–158 (FSMEEQSPMT…SGLFWGNHPQ (106 aa)) is connecting peptide.

This sequence belongs to the insulin family. As to expression, testis and prostate specific.

The protein localises to the secreted. Its function is as follows. May have a role in sperm development and fertilization. In Rattus norvegicus (Rat), this protein is Insulin-like peptide INSL6 (Insl6).